A 255-amino-acid polypeptide reads, in one-letter code: Snake venom serine protease HS112 (255 aa).

Positions Met-1–Ala-18 are cleaved as a signal peptide. A propeptide spanning residues Gln-19–Leu-24 is cleaved from the precursor. The 222-residue stretch at Val-25–Ala-246 folds into the Peptidase S1 domain. Cystine bridges form between Cys-31/Cys-162, Cys-49/Cys-65, Cys-97/Cys-253, Cys-141/Cys-207, Cys-173/Cys-186, and Cys-197/Cys-222. Active-site charge relay system residues include His-64 and Asp-109. N-linked (GlcNAc...) asparagine glycosylation is present at Asn-169. Ser-201 (charge relay system) is an active-site residue. N-linked (GlcNAc...) asparagine glycosylation occurs at Asn-248.

It belongs to the peptidase S1 family. Snake venom subfamily. As to quaternary structure, monomer. As to expression, expressed by the venom gland.

The protein localises to the secreted. Snake venom serine protease that may act in the hemostasis system of the prey. In Bothrops jararaca (Jararaca), this protein is Snake venom serine protease HS112.